A 487-amino-acid polypeptide reads, in one-letter code: 3-octaprenyl-4-hydroxybenzoate carboxy-lyase (487 aa).

Residue asparagine 172 coordinates Mn(2+). Prenylated FMN is bound by residues 175–177 (IYR), 189–191 (RWL), and 194–195 (RG). Glutamate 238 contributes to the Mn(2+) binding site. Aspartate 287 acts as the Proton donor in catalysis.

It belongs to the UbiD family. In terms of assembly, homohexamer. Requires prenylated FMN as cofactor. It depends on Mn(2+) as a cofactor.

It is found in the cell membrane. It catalyses the reaction a 4-hydroxy-3-(all-trans-polyprenyl)benzoate + H(+) = a 2-(all-trans-polyprenyl)phenol + CO2. Its pathway is cofactor biosynthesis; ubiquinone biosynthesis. Functionally, catalyzes the decarboxylation of 3-octaprenyl-4-hydroxy benzoate to 2-octaprenylphenol, an intermediate step in ubiquinone biosynthesis. The polypeptide is 3-octaprenyl-4-hydroxybenzoate carboxy-lyase (Nitrosococcus oceani (strain ATCC 19707 / BCRC 17464 / JCM 30415 / NCIMB 11848 / C-107)).